The following is a 323-amino-acid chain: tRNA dimethylallyltransferase (323 aa).

12-19 contacts ATP; sequence GPTAAGKT. 14-19 lines the substrate pocket; that stretch reads TAAGKT. 2 interaction with substrate tRNA regions span residues 37–40 and 161–165; these read DSAL and QRLIR.

Belongs to the IPP transferase family. In terms of assembly, monomer. Requires Mg(2+) as cofactor.

It carries out the reaction adenosine(37) in tRNA + dimethylallyl diphosphate = N(6)-dimethylallyladenosine(37) in tRNA + diphosphate. Functionally, catalyzes the transfer of a dimethylallyl group onto the adenine at position 37 in tRNAs that read codons beginning with uridine, leading to the formation of N6-(dimethylallyl)adenosine (i(6)A). This chain is tRNA dimethylallyltransferase, found in Pseudomonas syringae pv. tomato (strain ATCC BAA-871 / DC3000).